We begin with the raw amino-acid sequence, 314 residues long: tRNA uridine(34) hydroxylase (314 aa).

The region spanning 135 to 229 (ADPETLVIDT…YLEQIPAEES (95 aa)) is the Rhodanese domain. C189 serves as the catalytic Cysteine persulfide intermediate.

It belongs to the TrhO family.

It catalyses the reaction uridine(34) in tRNA + AH2 + O2 = 5-hydroxyuridine(34) in tRNA + A + H2O. Catalyzes oxygen-dependent 5-hydroxyuridine (ho5U) modification at position 34 in tRNAs. This chain is tRNA uridine(34) hydroxylase, found in Sinorhizobium fredii (strain NBRC 101917 / NGR234).